The following is a 152-amino-acid chain: Transcriptional regulator MraZ (152 aa).

SpoVT-AbrB domains are found at residues alanine 5–glutamate 52 and alanine 81–glutamate 124.

Belongs to the MraZ family. Forms oligomers.

The protein localises to the cytoplasm. It localises to the nucleoid. In Mannheimia succiniciproducens (strain KCTC 0769BP / MBEL55E), this protein is Transcriptional regulator MraZ.